A 318-amino-acid chain; its full sequence is Oxidoreductase swnN (318 aa).

This sequence belongs to the NmrA-type oxidoreductase family. Isoflavone reductase subfamily.

Its pathway is mycotoxin biosynthesis. Its function is as follows. Aminotransferase; part of the gene cluster that mediates the biosynthesis of swainsonine (SW), a cytotoxic fungal alkaloid and a potential cancer therapy drug. Swainsonine production occurs via a multibranched pathway and is dispensable for fungal colonization of plants and infection of insect hosts. The first step of swainsonine biosynthesis is the production of the precursor pipecolic acid (PA) via conversion of L-lysine (Lys) to 1-piperideine-6-carboxylate (P6C) by the aminotransferase swnA, the latter being further reduced to PA by the reductase swnR. The PKS-NRPS hybrid synthetase swnK uptakes and condensates PA and malonyl-CoA with and without skipping of the ketoreductase (KR) domain in order to produce 3 intermediates, 1-oxoindolizidine, (1S)-1-hydroxyindolizin, and (1R)-1-hydroxyindolizine; with the transisomer (1S)-1-hydroxyindolizin being predominant. The terminal thioester reductase (TE) domain of swnK is involved in reduction of the thioester bond to release the intermediate aldehydes. The oxidoreductase swnN could contribute to the reduction of 1-oxoindolizidine to (1S)-1-hydroxyindolizin and (1R)-1-hydroxyindolizine, contributing to the major route of SW production. The dioxygenase swnH2 would be responsible for the oxidization of (1R)-1-hydroxyindolizine into (1R,2S)-1,2-dihydroxyindolizine and of (1S)-1-hydroxyindolizin to yield both (1R,2S)-1,2-dihydroxyindolizine and (1S,2S)-1,2-dihydroxyindolizine. The dioxygenase swnH1 then performs the conversion of the 1,2-dihydroxyindolizine epimers to SW. The protein is Oxidoreductase swnN of Arthroderma benhamiae (strain ATCC MYA-4681 / CBS 112371) (Trichophyton mentagrophytes).